Consider the following 393-residue polypeptide: Succinate--CoA ligase [ADP-forming] subunit beta (393 aa).

The region spanning 9-242 (KELFAKHGVP…RAATDPLEWK (234 aa)) is the ATP-grasp domain. Residues K45, 52–54 (GRG), S94, and E99 contribute to the ATP site. The Mg(2+) site is built by N191 and D211. Substrate-binding positions include N262 and 324–326 (GIT).

It belongs to the succinate/malate CoA ligase beta subunit family. As to quaternary structure, heterotetramer of two alpha and two beta subunits. It depends on Mg(2+) as a cofactor.

It catalyses the reaction succinate + ATP + CoA = succinyl-CoA + ADP + phosphate. The enzyme catalyses GTP + succinate + CoA = succinyl-CoA + GDP + phosphate. The protein operates within carbohydrate metabolism; tricarboxylic acid cycle; succinate from succinyl-CoA (ligase route): step 1/1. Succinyl-CoA synthetase functions in the citric acid cycle (TCA), coupling the hydrolysis of succinyl-CoA to the synthesis of either ATP or GTP and thus represents the only step of substrate-level phosphorylation in the TCA. The beta subunit provides nucleotide specificity of the enzyme and binds the substrate succinate, while the binding sites for coenzyme A and phosphate are found in the alpha subunit. The polypeptide is Succinate--CoA ligase [ADP-forming] subunit beta (Mycobacterium leprae (strain Br4923)).